The chain runs to 2190 residues: Non-reducing polyketide synthase mapC' (2190 aa).

Residues 14–268 form an N-terminal acylcarrier protein transacylase domain (SAT) region; that stretch reads VLFGPQCPDI…HHEAHREGIQ (255 aa). Positions 401-817 constitute a Ketosynthase family 3 (KS3) domain; it reads ASPIAITGMA…GSNAALIVKE (417 aa). Residues C566, H701, and H740 each act as for beta-ketoacyl synthase activity in the active site. The segment at 893–1190 is malonyl-CoA:ACP transacylase (MAT) domain; that stretch reads CFGGQNGLTA…NVTSALWAQG (298 aa). Residue S979 is the For acyl/malonyl transferase activity of the active site. The N-terminal hotdog fold stretch occupies residues 1243 to 1375; the sequence is GQEAGLLCQL…GTVCLHQERS (133 aa). Positions 1243-1552 constitute a PKS/mFAS DH domain; that stretch reads GQEAGLLCQL…FTSVSIRSLT (310 aa). The interval 1251-1556 is product template (PT) domain; it reads QLSESPDERL…SIRSLTRALA (306 aa). Catalysis depends on H1277, which acts as the Proton acceptor; for dehydratase activity. The segment at 1401–1552 is C-terminal hotdog fold; the sequence is ASNGLKGSTV…FTSVSIRSLT (152 aa). D1458 serves as the catalytic Proton donor; for dehydratase activity. The Carrier domain maps to 1597-1671; that stretch reads ANDLATVQEM…GLVEHIFPGH (75 aa). S1631 carries the O-(pantetheine 4'-phosphoryl)serine modification. The segment at 1840–2187 is methyltransferase (CMeT) domain; sequence ATMSPSKPIK…AEGYEFLRTH (348 aa). Residues S1969, D2127, and H2159 each act as for thioesterase activity in the active site.

Its subcellular location is the cytoplasm. It is found in the cytosol. It carries out the reaction 3 malonyl-CoA + acetyl-CoA + S-adenosyl-L-methionine + H(+) = 5-methylorsellinate + S-adenosyl-L-homocysteine + 3 CO2 + 4 CoA. The protein operates within secondary metabolite biosynthesis; terpenoid biosynthesis. Non-reducing polyketide synthase; part of the gene cluster that mediates the biosynthesis of mycophenolic acid (MPA), the first isolated antibiotic natural product in the world obtained from a culture of Penicillium brevicompactum in 1893. MpaC' catalyzes the synthesis of 5-methylorsellinic acid (5MOA) via the condensation of 1 acetyl-CoA starter unit with 3 malonyl-CoA units and one methylation step. The first step of the pathway is the synthesis of 5-methylorsellinic acid (5MOA) by the cytosolic polyketide synthase mpaC. 5MOA is then converted to the phthalide compound 5,7-dihydroxy-4,6-dimethylphthalide (DHMP) by the endoplasmic reticulum-bound cytochrome P450 monooxygenase mpaDE. MpaDE first catalyzes hydroxylation of 5-MOA to 4,6-dihydroxy-2-(hydroxymethyl)-3-methylbenzoic acid (DHMB). MpaDE then acts as a lactone synthase that catalyzes the ring closure to convert DHMB into DHMP. The next step is the prenylation of DHMP by the Golgi apparatus-associated prenyltransferase mpaA to yield farnesyl-DHMP (FDHMP). The ER-bound oxygenase mpaB then mediates the oxidative cleavage the C19-C20 double bond in FDHMP to yield FDHMP-3C via a mycophenolic aldehyde intermediate. The O-methyltransferase mpaG catalyzes the methylation of FDHMP-3C to yield MFDHMP-3C. After the cytosolic methylation of FDHMP-3C, MFDHMP-3C enters into peroxisomes probably via free diffusion due to its low molecular weight. Upon a peroxisomal CoA ligation reaction, catalyzed by a beta-oxidation component enzyme acyl-CoA ligase ACL891, MFDHMP-3C-CoA would then be restricted to peroxisomes for the following beta-oxidation pathway steps. The peroxisomal beta-oxidation machinery than converts MFDHMP-3C-CoA into MPA_CoA, via a beta-oxidation chain-shortening process. Finally mpaH acts as a peroxisomal acyl-CoA hydrolase with high substrate specificity toward MPA-CoA to release the final product MPA. The sequence is that of Non-reducing polyketide synthase mapC' from Penicillium brevicompactum.